The primary structure comprises 717 residues: Probable metal-nicotianamine transporter YSL12 (717 aa).

The disordered stretch occupies residues 1–56 (MASHANASGGGGDEEMVEASTLRHRHGAGKDANGVGTERQLAAAAAEGEEEGPSSV). 14 helical membrane passes run 76 to 96 (AFVV…KLNL), 99 to 119 (GIIP…VRLW), 144 to 164 (CVVA…LFGM), 186 to 206 (IGWM…ALVP), 248 to 268 (LGKF…YTAG), 306 to 326 (IVNV…WPLI), 351 to 371 (VFIS…KVLI), 422 to 442 (VAFG…PQIF), 450 to 470 (ILVA…GAGL), 482 to 502 (LAIF…LVGL), 536 to 556 (FVSQ…VFWL), 593 to 613 (LPKH…AINL), 636 to 656 (FYIG…LFVW), and 671 to 691 (VASG…ILAL).

It belongs to the YSL (TC 2.A.67.2) family. As to expression, expressed in root cortex and stele.

Its subcellular location is the membrane. Functionally, may be involved in the transport of nicotianamine-chelated metals. This chain is Probable metal-nicotianamine transporter YSL12 (YSL12), found in Oryza sativa subsp. japonica (Rice).